The primary structure comprises 197 residues: Putative methyltransferase Mtx subunit A (197 aa).

This sequence belongs to the MtrA family. May be part of a complex composed of 3 subunits; MtxA, MtxH and MtxX.

The protein is Putative methyltransferase Mtx subunit A (mtxA) of Methanosarcina barkeri (strain Fusaro / DSM 804).